A 215-amino-acid polypeptide reads, in one-letter code: Probable GTP-binding protein EngB (215 aa).

One can recognise an EngB-type G domain in the interval 30–204; sequence TGIEVAFAGR…RQKLDTWFSE (175 aa). GTP contacts are provided by residues 38 to 45, 65 to 69, 83 to 86, 150 to 153, and 183 to 185; these read GRSNAGKS, GRTQL, DLPG, TKAD, and FSS. The Mg(2+) site is built by serine 45 and threonine 67.

This sequence belongs to the TRAFAC class TrmE-Era-EngA-EngB-Septin-like GTPase superfamily. EngB GTPase family. The cofactor is Mg(2+).

Necessary for normal cell division and for the maintenance of normal septation. This Escherichia coli O1:K1 / APEC protein is Probable GTP-binding protein EngB.